The chain runs to 215 residues: Pyrrolidone-carboxylate peptidase (215 aa).

Residues Glu-80, Cys-143, and His-167 contribute to the active site.

The protein belongs to the peptidase C15 family. As to quaternary structure, homotetramer.

The protein resides in the cytoplasm. It catalyses the reaction Release of an N-terminal pyroglutamyl group from a polypeptide, the second amino acid generally not being Pro.. Its function is as follows. Removes 5-oxoproline from various penultimate amino acid residues except L-proline. The chain is Pyrrolidone-carboxylate peptidase from Brevibacillus brevis (strain 47 / JCM 6285 / NBRC 100599).